The chain runs to 130 residues: MKLLVFALFLQVVQLSLAQDDGKCIDMPKLLKKMQPAIDECGYKDAPTDQAKHDAVTCGLQKLGIVTQNKELVVQTYKDYLDDTILQHKTELYNALDECCPSGTCPAQDTFKCYHEKIDSVCPGDKQKPQ.

The signal sequence occupies residues 1 to 18; the sequence is MKLLVFALFLQVVQLSLA.

It belongs to the scoloptoxin-17 family. In terms of processing, contains 4 disulfide bonds. In terms of tissue distribution, expressed by the venom gland.

It is found in the secreted. In Ethmostigmus rubripes (Giant centipede), this protein is U-scoloptoxin(17)-Er1a.